The sequence spans 140 residues: UPF0299 membrane protein CGSHiGG_01475 (140 aa).

4 helical membrane-spanning segments follow: residues Met-1 to Leu-21, Val-33 to Ile-52, Gly-60 to Ile-80, and Ile-92 to Gly-112.

Belongs to the UPF0299 family.

It is found in the cell inner membrane. This is UPF0299 membrane protein CGSHiGG_01475 from Haemophilus influenzae (strain PittGG).